We begin with the raw amino-acid sequence, 262 residues long: Hydroxyethylthiazole kinase (262 aa).

Met43 contributes to the substrate binding site. Residues Arg118 and Thr164 each coordinate ATP. A substrate-binding site is contributed by Ala191.

The protein belongs to the Thz kinase family. Requires Mg(2+) as cofactor.

The catalysed reaction is 5-(2-hydroxyethyl)-4-methylthiazole + ATP = 4-methyl-5-(2-phosphooxyethyl)-thiazole + ADP + H(+). The protein operates within cofactor biosynthesis; thiamine diphosphate biosynthesis; 4-methyl-5-(2-phosphoethyl)-thiazole from 5-(2-hydroxyethyl)-4-methylthiazole: step 1/1. Functionally, catalyzes the phosphorylation of the hydroxyl group of 4-methyl-5-beta-hydroxyethylthiazole (THZ). The polypeptide is Hydroxyethylthiazole kinase (Cereibacter sphaeroides (strain KD131 / KCTC 12085) (Rhodobacter sphaeroides)).